We begin with the raw amino-acid sequence, 1234 residues long: Complement factor H (1234 aa).

The first 18 residues, 1–18 (MRLSARIIWLILWTVCAA), serve as a signal peptide directing secretion. 20 consecutive Sushi domains span residues 19 to 82 (EDCK…ICRK), 83 to 143 (KPCG…LCEV), 144 to 207 (VKCL…RCVE), 208 to 264 (ILCT…FCEE), 265 to 322 (KRCS…RCTL), 324 to 386 (PCEF…VPCV), 387 to 444 (RKCV…KCIR), 446 to 507 (KTCS…SCIK), 508 to 566 (SCDM…SCYE), 567 to 624 (RECS…TCKG), 627 to 685 (ASCA…VCIE), 688 to 745 (RTCG…KCVA), 750 to 804 (EKCR…NCTS), 806 to 863 (TSCP…RCIE), 865 to 933 (IPCS…RCVG), 934 to 991 (LPCG…KCIK), 992 to 1050 (TDCD…VCKD), 1051 to 1109 (NSCV…KCRD), 1112 to 1170 (GKCG…TCLH), and 1171 to 1234 (ACVI…PTCV). 40 disulfide bridges follow: Cys-21-Cys-66, Cys-52-Cys-80, Cys-85-Cys-129, Cys-114-Cys-141, Cys-146-Cys-192, Cys-178-Cys-205, Cys-210-Cys-251, Cys-237-Cys-262, Cys-267-Cys-309, Cys-294-Cys-320, Cys-325-Cys-374, Cys-357-Cys-385, Cys-389-Cys-431, Cys-416-Cys-442, Cys-448-Cys-494, Cys-477-Cys-505, Cys-509-Cys-553, Cys-536-Cys-564, Cys-569-Cys-610, Cys-597-Cys-622, Cys-629-Cys-672, Cys-658-Cys-683, Cys-690-Cys-732, Cys-718-Cys-743, Cys-752-Cys-791, Cys-780-Cys-802, Cys-808-Cys-850, Cys-836-Cys-861, Cys-867-Cys-920, Cys-906-Cys-931, Cys-936-Cys-978, Cys-964-Cys-989, Cys-994-Cys-1037, Cys-1023-Cys-1048, Cys-1053-Cys-1096, Cys-1082-Cys-1107, Cys-1114-Cys-1157, Cys-1143-Cys-1168, Cys-1172-Cys-1223, and Cys-1206-Cys-1233. Residues Asn-676, Asn-721, Asn-773, and Asn-801 are each glycosylated (N-linked (GlcNAc...) asparagine). The segment at 872 to 896 (TIEHGSINLPRSSEERRDSIESSSH) is disordered. Positions 883–896 (SSEERRDSIESSSH) are enriched in basic and acidic residues. N-linked (GlcNAc...) asparagine glycosylation is found at Asn-1030 and Asn-1061. Residue Ser-1198 is modified to Phosphoserine. Residue Asn-1225 is glycosylated (N-linked (GlcNAc...) asparagine).

As to quaternary structure, homodimer. Also forms homooligomers. Interacts with complement protein C3b; this interaction inhibits complement activation. Interacts with complement protein C3d. Interacts with CR3/ITGAM; this interaction mediates adhesion of neutrophils to pathogens leading to pathogen clearance. Post-translationally, sulfated on tyrosine residues. CFH is one of the most abundant complement components in blood where the liver is the major source of CFH protein in vivo. in addition, CFH is secreted by additional cell types including monocytes, fibroblasts, or endothelial cells.

Its subcellular location is the secreted. Glycoprotein that plays an essential role in maintaining a well-balanced immune response by modulating complement activation. Acts as a soluble inhibitor of complement, where its binding to self markers such as glycan structures prevents complement activation and amplification on cell surfaces. Accelerates the decay of the complement alternative pathway (AP) C3 convertase C3bBb, thus preventing local formation of more C3b, the central player of the complement amplification loop. As a cofactor of the serine protease factor I, CFH also regulates proteolytic degradation of already-deposited C3b. In addition, mediates several cellular responses through interaction with specific receptors. For example, interacts with CR3/ITGAM receptor and thereby mediates the adhesion of human neutrophils to different pathogens. In turn, these pathogens are phagocytosed and destroyed. This Mus musculus (Mouse) protein is Complement factor H (Cfh).